The following is a 603-amino-acid chain: DNA mismatch repair protein MutL (603 aa).

This sequence belongs to the DNA mismatch repair MutL/HexB family.

This protein is involved in the repair of mismatches in DNA. It is required for dam-dependent methyl-directed DNA mismatch repair. May act as a 'molecular matchmaker', a protein that promotes the formation of a stable complex between two or more DNA-binding proteins in an ATP-dependent manner without itself being part of a final effector complex. This chain is DNA mismatch repair protein MutL, found in Nitrobacter winogradskyi (strain ATCC 25391 / DSM 10237 / CIP 104748 / NCIMB 11846 / Nb-255).